A 396-amino-acid chain; its full sequence is E3 ubiquitin-protein transferase MAEA (396 aa).

One can recognise a LisH domain in the interval Lys121–Asp153. One can recognise a CTLH domain in the interval Met159–Asp216. The RING-Gid-type zinc-finger motif lies at Cys314 to Thr381.

In terms of assembly, identified in the CTLH complex that contains at least MAEA, RMND5A, GID8, WDR26, and RANBP9 and/or RANBP10 as the catalytic core. Interacts with F-actin.

It is found in the nucleus matrix. The protein localises to the cell membrane. The protein resides in the cytoplasm. Its subcellular location is the cytoskeleton. The catalysed reaction is S-ubiquitinyl-[E2 ubiquitin-conjugating enzyme]-L-cysteine + [acceptor protein]-L-lysine = [E2 ubiquitin-conjugating enzyme]-L-cysteine + N(6)-ubiquitinyl-[acceptor protein]-L-lysine.. Its function is as follows. Core component of the CTLH E3 ubiquitin-protein ligase complex that selectively accepts ubiquitin from UBE2H and mediates ubiquitination and subsequent proteasomal degradation of the transcription factor HBP1. MAEA and RMND5A are both required for catalytic activity of the CTLH E3 ubiquitin-protein ligase complex. MAEA is required for normal cell proliferation. The CTLH E3 ubiquitin-protein ligase complex is not required for the degradation of enzymes involved in gluconeogenesis, such as FBP1. Plays a role in erythroblast maturation and in the development of mature macrophages. Mediates the attachment of erythroid cell to mature macrophages; this MAEA-mediated contact inhibits erythroid cell apoptosis. Participates in erythroblastic island formation, which is the functional unit of definitive erythropoiesis. Associates with F-actin to regulate actin distribution in erythroblasts and macrophages. May contribute to nuclear architecture and cells division events. The polypeptide is E3 ubiquitin-protein transferase MAEA (maea) (Xenopus laevis (African clawed frog)).